The chain runs to 402 residues: Dihydrolipoyllysine-residue acetyltransferase component of pyruvate dehydrogenase complex (402 aa).

Residues 2 to 77 (ANEFKFTDVG…HIGQVMAVID (76 aa)) enclose the Lipoyl-binding domain. At K43 the chain carries N6-lipoyllysine. Disordered regions lie at residues 82–110 (AAAP…APVT) and 143–172 (PQPT…PSGE). Composition is skewed to pro residues over residues 87–107 (APQP…PTPA) and 143–162 (PQPT…PTPA). Residue H374 is part of the active site.

The protein belongs to the 2-oxoacid dehydrogenase family. Forms a 24-polypeptide structural core with octahedral symmetry. It depends on (R)-lipoate as a cofactor.

The enzyme catalyses N(6)-[(R)-dihydrolipoyl]-L-lysyl-[protein] + acetyl-CoA = N(6)-[(R)-S(8)-acetyldihydrolipoyl]-L-lysyl-[protein] + CoA. The pyruvate dehydrogenase complex catalyzes the overall conversion of pyruvate to acetyl-CoA and CO(2). It contains multiple copies of three enzymatic components: pyruvate dehydrogenase (E1), dihydrolipoamide acetyltransferase (E2) and lipoamide dehydrogenase (E3). The protein is Dihydrolipoyllysine-residue acetyltransferase component of pyruvate dehydrogenase complex (pdhC) of Mycoplasma pneumoniae (strain ATCC 29342 / M129 / Subtype 1) (Mycoplasmoides pneumoniae).